The primary structure comprises 605 residues: Pyruvate decarboxylase 1 (605 aa).

Aspartate 67 and histidine 154 together coordinate substrate. The segment at 432–514 (DSWFNCQKLR…FLINNGGYTI (83 aa)) is thiamine pyrophosphate binding. Aspartate 482, asparagine 509, and glycine 511 together coordinate Mg(2+). Glutamate 515 contacts substrate.

The protein belongs to the TPP enzyme family. Homotetramer. It depends on a metal cation as a cofactor. The cofactor is thiamine diphosphate.

It carries out the reaction a 2-oxocarboxylate + H(+) = an aldehyde + CO2. This is Pyruvate decarboxylase 1 (PDC1) from Oryza sativa subsp. indica (Rice).